A 122-amino-acid polypeptide reads, in one-letter code: Large ribosomal subunit protein uL18 (122 aa).

Positions 1–27 (MSNLSRKQQTQKRHRRLRRHLNGTAQR) are disordered. Residues 9–21 (QTQKRHRRLRRHL) are compositionally biased toward basic residues.

The protein belongs to the universal ribosomal protein uL18 family. As to quaternary structure, part of the 50S ribosomal subunit; part of the 5S rRNA/L5/L18/L25 subcomplex. Contacts the 5S and 23S rRNAs.

In terms of biological role, this is one of the proteins that bind and probably mediate the attachment of the 5S RNA into the large ribosomal subunit, where it forms part of the central protuberance. The protein is Large ribosomal subunit protein uL18 of Prochlorococcus marinus (strain MIT 9303).